Here is a 95-residue protein sequence, read N- to C-terminus: Co-chaperonin GroES (95 aa).

This sequence belongs to the GroES chaperonin family. In terms of assembly, heptamer of 7 subunits arranged in a ring. Interacts with the chaperonin GroEL.

The protein localises to the cytoplasm. Together with the chaperonin GroEL, plays an essential role in assisting protein folding. The GroEL-GroES system forms a nano-cage that allows encapsulation of the non-native substrate proteins and provides a physical environment optimized to promote and accelerate protein folding. GroES binds to the apical surface of the GroEL ring, thereby capping the opening of the GroEL channel. In Staphylococcus saprophyticus subsp. saprophyticus (strain ATCC 15305 / DSM 20229 / NCIMB 8711 / NCTC 7292 / S-41), this protein is Co-chaperonin GroES.